We begin with the raw amino-acid sequence, 171 residues long: ATP synthase subunit b (171 aa).

Residues 4–24 (IAFFVICVGFPSLIFASASIQ) traverse the membrane as a helical segment.

The protein belongs to the ATPase B chain family. In terms of assembly, F-type ATPases have 2 components, F(1) - the catalytic core - and F(0) - the membrane proton channel. F(1) has five subunits: alpha(3), beta(3), gamma(1), delta(1), epsilon(1). F(0) has three main subunits: a(1), b(2) and c(10-14). The alpha and beta chains form an alternating ring which encloses part of the gamma chain. F(1) is attached to F(0) by a central stalk formed by the gamma and epsilon chains, while a peripheral stalk is formed by the delta and b chains.

Its subcellular location is the cell inner membrane. Its function is as follows. F(1)F(0) ATP synthase produces ATP from ADP in the presence of a proton or sodium gradient. F-type ATPases consist of two structural domains, F(1) containing the extramembraneous catalytic core and F(0) containing the membrane proton channel, linked together by a central stalk and a peripheral stalk. During catalysis, ATP synthesis in the catalytic domain of F(1) is coupled via a rotary mechanism of the central stalk subunits to proton translocation. Functionally, component of the F(0) channel, it forms part of the peripheral stalk, linking F(1) to F(0). The protein is ATP synthase subunit b of Helicobacter hepaticus (strain ATCC 51449 / 3B1).